We begin with the raw amino-acid sequence, 104 residues long: NADH-quinone oxidoreductase subunit K (104 aa).

Helical transmembrane passes span 4-24 (VPAS…LFGA), 31-51 (VIVL…LVAF), and 67-87 (LFTM…LIAL).

Belongs to the complex I subunit 4L family. In terms of assembly, NDH-1 is composed of 14 different subunits. Subunits NuoA, H, J, K, L, M, N constitute the membrane sector of the complex.

It localises to the cell membrane. The enzyme catalyses a quinone + NADH + 5 H(+)(in) = a quinol + NAD(+) + 4 H(+)(out). NDH-1 shuttles electrons from NADH, via FMN and iron-sulfur (Fe-S) centers, to quinones in the respiratory chain. The immediate electron acceptor for the enzyme in this species is believed to be a menaquinone. Couples the redox reaction to proton translocation (for every two electrons transferred, four hydrogen ions are translocated across the cytoplasmic membrane), and thus conserves the redox energy in a proton gradient. This Bacillus cytotoxicus (strain DSM 22905 / CIP 110041 / 391-98 / NVH 391-98) protein is NADH-quinone oxidoreductase subunit K.